The primary structure comprises 172 residues: Bone marrow stromal antigen 2 (172 aa).

Residues methionine 1 to arginine 26 lie on the Cytoplasmic side of the membrane. A Glycyl lysine isopeptide (Lys-Gly) (interchain with G-Cter in ubiquitin) cross-link involves residue lysine 20. The chain crosses the membrane as a helical; Signal-anchor for type II membrane protein span at residues tryptophan 27–valine 47. The Extracellular segment spans residues tyrosine 48–serine 152. N-linked (GlcNAc...) asparagine glycosylation is found at asparagine 70 and asparagine 97. Residues leucine 103–glutamine 149 adopt a coiled-coil conformation. Serine 152 is lipidated: GPI-anchor amidated serine. Residues glycine 153–phenylalanine 172 constitute a propeptide, removed in mature form.

In terms of assembly, parallel homodimer; disulfide-linked. May form homotetramers under reducing conditions. Isoform 1 and isoform 2 form homodimers and also heterodimers with each other. Dimerization is essential for its antiviral activity. Interacts (via cytoplasmic domain) with ARHGAP44. Interacts with MMP14 (via C-terminal cytoplasmic tail). Interacts with LILRA4/ILT7. Interacts with RNF115. In terms of processing, N-glycosylated. The GPI anchor is essential for its antiviral activity. In terms of tissue distribution, ubiquitously expressed, with highest levels in brain and liver. Present in liver (at protein level).

It localises to the golgi apparatus. The protein resides in the trans-Golgi network. It is found in the cell membrane. The protein localises to the late endosome. Its subcellular location is the membrane raft. It localises to the cytoplasm. The protein resides in the apical cell membrane. In terms of biological role, IFN-induced antiviral host restriction factor which efficiently blocks the release of diverse mammalian enveloped viruses by directly tethering nascent virions to the membranes of infected cells. Acts as a direct physical tether, holding virions to the cell membrane and linking virions to each other. The tethered virions can be internalized by endocytosis and subsequently degraded or they can remain on the cell surface. In either case, their spread as cell-free virions is restricted. Its target viruses belong to diverse families, including retroviridae: human immunodeficiency virus type 1 (HIV-1), mouse mammary tumor virus (MMTV) and murine leukemia virus (MLV), filoviridae: ebola virus (EBOV), arenaviridae: lassa virus (LASV), and rhabdoviridae: vesicular stomatitis virus (VSV). Can inhibit cell surface proteolytic activity of MMP14 causing decreased activation of MMP15 which results in inhibition of cell growth and migration. Can stimulate signaling by LILRA4/ILT7 and consequently provide negative feedback to the production of IFN by plasmacytoid dendritic cells in response to viral infection. Plays a role in the organization of the subapical actin cytoskeleton in polarized epithelial cells. This chain is Bone marrow stromal antigen 2 (Bst2), found in Rattus norvegicus (Rat).